A 236-amino-acid polypeptide reads, in one-letter code: uncharacterized protein (236 aa).

The first 24 residues, 1–24 (MRKKHFNMILKLALISSLLALAAS), serve as a signal peptide directing secretion. 3 N-linked (GlcNAc...) asparagine glycosylation sites follow: N59, N171, and N197.

The protein resides in the secreted. This is an uncharacterized protein from Caenorhabditis elegans.